The following is a 450-amino-acid chain: Trigger factor (450 aa).

In terms of domain architecture, PPIase FKBP-type spans 161-246 (GDRVVIDFKG…VKTVEAPEYP (86 aa)). The disordered stretch occupies residues 422–450 (PMSLQELMSPQQPEAESAEGESKQDETKE). The span at 441–450 (GESKQDETKE) shows a compositional bias: basic and acidic residues.

Belongs to the FKBP-type PPIase family. Tig subfamily.

It localises to the cytoplasm. It carries out the reaction [protein]-peptidylproline (omega=180) = [protein]-peptidylproline (omega=0). Its function is as follows. Involved in protein export. Acts as a chaperone by maintaining the newly synthesized protein in an open conformation. Functions as a peptidyl-prolyl cis-trans isomerase. In Alkalilimnicola ehrlichii (strain ATCC BAA-1101 / DSM 17681 / MLHE-1), this protein is Trigger factor.